The chain runs to 330 residues: Aspartate--ammonia ligase (330 aa).

Belongs to the class-II aminoacyl-tRNA synthetase family. AsnA subfamily.

The protein localises to the cytoplasm. The enzyme catalyses L-aspartate + NH4(+) + ATP = L-asparagine + AMP + diphosphate + H(+). Its pathway is amino-acid biosynthesis; L-asparagine biosynthesis; L-asparagine from L-aspartate (ammonia route): step 1/1. This is Aspartate--ammonia ligase from Actinobacillus pleuropneumoniae serotype 7 (strain AP76).